The following is a 504-amino-acid chain: Carnosic acid synthase (504 aa).

The chain crosses the membrane as a helical span at residues 4 to 24 (FIILSLAFIAAWVVYSRWSEY). Heme is bound at residue C447.

This sequence belongs to the cytochrome P450 family. Requires heme as cofactor. Expressed in glandular trichomes of young leaves.

The protein resides in the membrane. It catalyses the reaction 11-hydroxyferruginol + 3 reduced [NADPH--hemoprotein reductase] + 3 O2 = carnosate + 3 oxidized [NADPH--hemoprotein reductase] + 4 H2O + 4 H(+). The catalysed reaction is miltiradiene + 2 reduced [NADPH--hemoprotein reductase] + 2 O2 = miltiradien-20-al + 2 oxidized [NADPH--hemoprotein reductase] + 3 H2O + 2 H(+). It carries out the reaction ferruginol + 3 reduced [NADPH--hemoprotein reductase] + 3 O2 = pisiferate + 3 oxidized [NADPH--hemoprotein reductase] + 4 H2O + 4 H(+). It participates in secondary metabolite biosynthesis; terpenoid biosynthesis. Monooxygenase involved in the biosynthesis of carnosate, a potent antioxidant labdane-related diterpene natural products. Catalyzes the oxidation of 11-hydroxyferruginol to produce carnosate. Mediates the conversion of miltiradien into miltiradien-20-al. Also involved in the production of pisiferic acid and derivative products from ferruginol. The chain is Carnosic acid synthase from Rosmarinus officinalis (Rosemary).